A 230-amino-acid chain; its full sequence is Cytidylate kinase (230 aa).

Gly-16–Thr-24 lines the ATP pocket.

Belongs to the cytidylate kinase family. Type 1 subfamily.

It localises to the cytoplasm. It carries out the reaction CMP + ATP = CDP + ADP. The catalysed reaction is dCMP + ATP = dCDP + ADP. This is Cytidylate kinase from Lactobacillus gasseri (strain ATCC 33323 / DSM 20243 / BCRC 14619 / CIP 102991 / JCM 1131 / KCTC 3163 / NCIMB 11718 / NCTC 13722 / AM63).